Here is a 112-residue protein sequence, read N- to C-terminus: uncharacterized protein (112 aa).

The protein to Buchnera BUsg564.

This is an uncharacterized protein from Buchnera aphidicola subsp. Acyrthosiphon pisum (strain APS) (Acyrthosiphon pisum symbiotic bacterium).